The sequence spans 576 residues: CDPK-related kinase 1 (576 aa).

Positions 1-39 (MGICHGKPVEQQSKSLPVSGETNEAPTNSQPPAKSSGFP) are disordered. Gly-2 carries the N-myristoyl glycine lipid modification. Over residues 10–33 (EQQSKSLPVSGETNEAPTNSQPPA) the composition is skewed to polar residues. The Protein kinase domain maps to 123–385 (YEIDGEVGRG…AAQALCHPWL (263 aa)). ATP-binding positions include 129–137 (VGRGHFGYT) and Lys-155. The active-site Proton acceptor is the Asp-251. Ser-291 carries the phosphoserine modification. Residue Ser-333 is modified to Phosphoserine; by CPK1 and CPK34. The interval 390–420 (ELKIPSDMIIYKLVKVYIMSTSLRKSALAAL) is autoinhibitory domain. The segment at 409–429 (STSLRKSALAALAKTLTVPQL) is calmodulin binding (CaMBD). EF-hand domains lie at 427–463 (PQLA…STDA), 464–499 (MKDS…VYQL), 500–539 (EAME…GPSV), and 542–571 (HVVL…VSSR). Residues Ser-442, Asn-444, Tyr-446, Lys-483, Glu-488, Asp-519, Asn-521, Glu-528, Asp-553, and Lys-555 each coordinate Ca(2+). The residue at position 557 (Ser-557) is a Phosphoserine.

This sequence belongs to the protein kinase superfamily. Ser/Thr protein kinase family. CDPK subfamily. As to quaternary structure, binds calmodulin (CaM) in a calcium-dependent manner. Interacts with HSFA1A. Autophosphorylated.

The protein localises to the membrane. It carries out the reaction L-seryl-[protein] + ATP = O-phospho-L-seryl-[protein] + ADP + H(+). The enzyme catalyses L-threonyl-[protein] + ATP = O-phospho-L-threonyl-[protein] + ADP + H(+). Activated by calcium and calmodulin. Autophosphorylation may play an important role in the regulation of the kinase activity. Functionally, may play a role in signal transduction pathways that involve calcium as a second messenger. Serine/threonine kinase that phosphorylates histone H3. Confers thermotolerance; involved in the heat-shock-mediated calmodulin-dependent signal transduction leading to the activation of heat-shock transcription factors (HSFs); phosphorylates HSFA1A. In Arabidopsis thaliana (Mouse-ear cress), this protein is CDPK-related kinase 1 (CRK1).